Reading from the N-terminus, the 228-residue chain is Cytidylate kinase (228 aa).

17-25 (GPTASGKGT) contributes to the ATP binding site.

It belongs to the cytidylate kinase family. Type 1 subfamily.

The protein resides in the cytoplasm. It catalyses the reaction CMP + ATP = CDP + ADP. It carries out the reaction dCMP + ATP = dCDP + ADP. The polypeptide is Cytidylate kinase (Burkholderia ambifaria (strain ATCC BAA-244 / DSM 16087 / CCUG 44356 / LMG 19182 / AMMD) (Burkholderia cepacia (strain AMMD))).